Reading from the N-terminus, the 465-residue chain is Glutamate--tRNA ligase (465 aa).

The 'HIGH' region signature appears at 8–18; the sequence is PSPTGDLHIGG. The 'KMSKS' region motif lies at 235-239; sequence RLSKR. Residue Lys238 participates in ATP binding.

Belongs to the class-I aminoacyl-tRNA synthetase family. Glutamate--tRNA ligase type 1 subfamily. In terms of assembly, monomer.

It localises to the cytoplasm. The enzyme catalyses tRNA(Glu) + L-glutamate + ATP = L-glutamyl-tRNA(Glu) + AMP + diphosphate. In terms of biological role, catalyzes the attachment of glutamate to tRNA(Glu) in a two-step reaction: glutamate is first activated by ATP to form Glu-AMP and then transferred to the acceptor end of tRNA(Glu). This chain is Glutamate--tRNA ligase, found in Dichelobacter nodosus (strain VCS1703A).